The sequence spans 803 residues: Ras GTPase-activating protein 4B (803 aa).

C2 domains follow at residues Met1–Ala105 and Val116–Phe232. The Ca(2+) site is built by Asp21, Asp27, Asp74, Asp76, Ser79, Asp82, Asp149, Asp155, Asp202, Asp204, Ser207, and Asp210. Positions Gly318–Leu546 constitute a Ras-GAP domain. The region spanning Pro566–Ile673 is the PH domain. The segment at Asn675–Arg711 adopts a Btk-type zinc-finger fold. Zn(2+) contacts are provided by His683, Cys694, Cys695, and Cys705. The tract at residues Glu781 to Thr803 is disordered.

It depends on Ca(2+) as a cofactor.

It localises to the cytoplasm. Its subcellular location is the cytosol. It is found in the cell membrane. Its function is as follows. Ca(2+)-dependent Ras GTPase-activating protein, that may play a role in the Ras-MAPK pathway. The chain is Ras GTPase-activating protein 4B (RASA4B) from Homo sapiens (Human).